A 353-amino-acid chain; its full sequence is Photosystem II D2 protein (353 aa).

Position 2 is an N-acetylthreonine (Thr2). Position 2 is a phosphothreonine (Thr2). A helical membrane pass occupies residues 41 to 61 (CAYFALGGWLTGTTFVTSWYT). Residue His118 participates in chlorophyll a binding. The helical transmembrane segment at 125-141 (GFMLRQFEIARSVQLRP) threads the bilayer. Pheophytin a is bound by residues Gln130 and Asn143. The helical transmembrane segment at 153 to 166 (VFVSVFLIYPLGQS) threads the bilayer. Position 198 (His198) interacts with chlorophyll a. A helical transmembrane segment spans residues 208-228 (AALLCAIHGATVENTIFEDGD). A plastoquinone contacts are provided by His215 and Phe262. His215 lines the Fe cation pocket. Position 269 (His269) interacts with Fe cation. The chain crosses the membrane as a helical span at residues 279-295 (GLWMSAVGVVGLAVNLR).

This sequence belongs to the reaction center PufL/M/PsbA/D family. PSII is composed of 1 copy each of membrane proteins PsbA, PsbB, PsbC, PsbD, PsbE, PsbF, PsbH, PsbI, PsbJ, PsbK, PsbL, PsbM, PsbT, PsbX, PsbY, PsbZ, Psb30/Ycf12, at least 3 peripheral proteins of the oxygen-evolving complex and a large number of cofactors. It forms dimeric complexes. The D1/D2 heterodimer binds P680, chlorophylls that are the primary electron donor of PSII, and subsequent electron acceptors. It shares a non-heme iron and each subunit binds pheophytin, quinone, additional chlorophylls, carotenoids and lipids. There is also a Cl(-1) ion associated with D1 and D2, which is required for oxygen evolution. The PSII complex binds additional chlorophylls, carotenoids and specific lipids. is required as a cofactor.

It is found in the plastid. Its subcellular location is the chloroplast thylakoid membrane. It carries out the reaction 2 a plastoquinone + 4 hnu + 2 H2O = 2 a plastoquinol + O2. In terms of biological role, photosystem II (PSII) is a light-driven water:plastoquinone oxidoreductase that uses light energy to abstract electrons from H(2)O, generating O(2) and a proton gradient subsequently used for ATP formation. It consists of a core antenna complex that captures photons, and an electron transfer chain that converts photonic excitation into a charge separation. The D1/D2 (PsbA/PsbD) reaction center heterodimer binds P680, the primary electron donor of PSII as well as several subsequent electron acceptors. D2 is needed for assembly of a stable PSII complex. The protein is Photosystem II D2 protein of Chaetosphaeridium globosum (Charophycean green alga).